The following is a 53-amino-acid chain: UPF0391 membrane protein KPK_4780 (53 aa).

2 helical membrane-spanning segments follow: residues 4 to 24 and 30 to 47; these read WGII…GGLA and AAKI…VSLF.

The protein belongs to the UPF0391 family.

The protein localises to the cell membrane. The polypeptide is UPF0391 membrane protein KPK_4780 (Klebsiella pneumoniae (strain 342)).